Here is a 757-residue protein sequence, read N- to C-terminus: Protein ALTERED SEED GERMINATION 2 (757 aa).

WD repeat units follow at residues F6–E43, G48–S87, G91–E132, C145–P185, K213–S253, and R277–G316. Positions R245–R257 match the Nuclear localization signal motif. The TPR repeat unit spans residues F442 to D475. Residues A519–Y601 form a disordered region. Residues S523–R532 show a composition bias toward basic and acidic residues. Residues E533–L543 show a composition bias toward acidic residues. Positions T582–Y601 are enriched in polar residues. WD repeat units follow at residues N618–V658 and G661–V700. A lipid anchor (S-12-hydroxyfarnesyl cysteine; by FTB/ERA1) is attached at C754.

As to quaternary structure, interacts with DDB1; the subcellular localization of this complex depends on farnesylation status. Binds to HDA9 in the cytosol when farnesylated. Farnesylated at Cys-754 by FTB/ERA1; this modification triggers an exclusion from the nucleus.

The protein resides in the nucleus. It localises to the cytoplasm. Its subcellular location is the cytosol. It functions in the pathway protein modification; protein ubiquitination. May function as a substrate adapter for CUL4-DDB1 E3 ubiquitin-protein ligase complex. Negative regulator of fatty acid biosynthetic process and accumulation. Acts as an abscisic acid (ABA) negative regulator. Involved in responses to salt (NaCl) and osmotic (e.g. in response to mannitol and PEG) stresses. The polypeptide is Protein ALTERED SEED GERMINATION 2 (Arabidopsis thaliana (Mouse-ear cress)).